We begin with the raw amino-acid sequence, 454 residues long: Glycosyl hydrolase family 109 protein (454 aa).

A signal peptide (tat-type signal) is located at residues 1–29; it reads MFAMKRREFIAASAAVAASSLLPQTPAWA. NAD(+) is bound by residues 43 to 44, aspartate 65, 116 to 119, 136 to 137, and asparagine 165; these read MR, WEYH, and EV. Tyrosine 194 contributes to the substrate binding site. Position 224 to 228 (224 to 228) interacts with NAD(+); the sequence is SEARW. Residues arginine 229, 241 to 244, and tyrosine 324 contribute to the substrate site; that span reads YPSH. NAD(+) is bound at residue tyrosine 241.

Belongs to the Gfo/Idh/MocA family. Glycosyl hydrolase 109 subfamily. Requires NAD(+) as cofactor. In terms of processing, predicted to be exported by the Tat system. The position of the signal peptide cleavage has not been experimentally proven.

In terms of biological role, glycosidase. The polypeptide is Glycosyl hydrolase family 109 protein (Stenotrophomonas maltophilia (strain K279a)).